A 347-amino-acid polypeptide reads, in one-letter code: UDP-rhamnose/UDP-galactose transporter 1 (347 aa).

The next 10 membrane-spanning stretches (helical) occupy residues 11 to 31 (AVSD…IIMA), 43 to 63 (FGFA…VGMV), 80 to 100 (LLWF…SLML), 103 to 123 (VGFY…LEWI), 132 to 152 (EVKA…VTDV), 159 to 179 (FICA…IGSL), 195 to 215 (APIQ…LLSG), 223 to 243 (MTYG…FCNI), 256 to 276 (SFQV…WLLF), and 285 to 305 (IAGM…VDIE).

It belongs to the TPT transporter family. TPT (TC 2.A.7.9) subfamily. Widely expressed in the whole plant.

It is found in the golgi apparatus membrane. Its function is as follows. Nucleotide-sugar transporter that transports UDP-rhamnose or UDP-galactose and UMP in a strict counter-exchange mode. This chain is UDP-rhamnose/UDP-galactose transporter 1, found in Arabidopsis thaliana (Mouse-ear cress).